The primary structure comprises 1056 residues: Carbamoyl phosphate synthase large chain (1056 aa).

The tract at residues 1 to 398 is carboxyphosphate synthetic domain; the sequence is MPRDPSIKKV…AFLKALRSLD (398 aa). ATP is bound by residues Arg-127, Arg-167, Gly-173, Gly-174, Glu-206, Val-208, Glu-213, Gly-239, Val-240, His-241, Gln-282, and Glu-295. Residues 131–324 enclose the ATP-grasp 1 domain; that stretch reads RDLMNRIGEP…IARVASKIAI (194 aa). Mg(2+)-binding residues include Gln-282, Glu-295, and Asn-297. Gln-282, Glu-295, and Asn-297 together coordinate Mn(2+). An oligomerization domain region spans residues 399-532; the sequence is TDVEHHTVLS…STYGDKVCEV (134 aa). A carbamoyl phosphate synthetic domain region spans residues 533 to 921; sequence THSDRKKVMI…YKASIAAHNR (389 aa). One can recognise an ATP-grasp 2 domain in the interval 663–854; the sequence is SVLLDSLSIP…LAKIAARVMM (192 aa). 10 residues coordinate ATP: Arg-699, Arg-738, Leu-740, Glu-745, Gly-770, Val-771, His-772, Ser-773, Gln-813, and Glu-825. 3 residues coordinate Mg(2+): Gln-813, Glu-825, and Asn-827. Positions 813, 825, and 827 each coordinate Mn(2+). The region spanning 920-1056 is the MGS-like domain; sequence NRLPKSGNVF…IEPLQHYIGR (137 aa). An allosteric domain region spans residues 922–1056; the sequence is LPKSGNVFIS…IEPLQHYIGR (135 aa).

Belongs to the CarB family. As to quaternary structure, composed of two chains; the small (or glutamine) chain promotes the hydrolysis of glutamine to ammonia, which is used by the large (or ammonia) chain to synthesize carbamoyl phosphate. Tetramer of heterodimers (alpha,beta)4. The cofactor is Mg(2+). Mn(2+) serves as cofactor.

It catalyses the reaction hydrogencarbonate + L-glutamine + 2 ATP + H2O = carbamoyl phosphate + L-glutamate + 2 ADP + phosphate + 2 H(+). The catalysed reaction is hydrogencarbonate + NH4(+) + 2 ATP = carbamoyl phosphate + 2 ADP + phosphate + 2 H(+). The protein operates within amino-acid biosynthesis; L-arginine biosynthesis; carbamoyl phosphate from bicarbonate: step 1/1. It participates in pyrimidine metabolism; UMP biosynthesis via de novo pathway; (S)-dihydroorotate from bicarbonate: step 1/3. Its function is as follows. Large subunit of the glutamine-dependent carbamoyl phosphate synthetase (CPSase). CPSase catalyzes the formation of carbamoyl phosphate from the ammonia moiety of glutamine, carbonate, and phosphate donated by ATP, constituting the first step of 2 biosynthetic pathways, one leading to arginine and/or urea and the other to pyrimidine nucleotides. The large subunit (synthetase) binds the substrates ammonia (free or transferred from glutamine from the small subunit), hydrogencarbonate and ATP and carries out an ATP-coupled ligase reaction, activating hydrogencarbonate by forming carboxy phosphate which reacts with ammonia to form carbamoyl phosphate. The sequence is that of Carbamoyl phosphate synthase large chain from Methanospirillum hungatei JF-1 (strain ATCC 27890 / DSM 864 / NBRC 100397 / JF-1).